The sequence spans 316 residues: 4-diphosphocytidyl-2-C-methyl-D-erythritol kinase (316 aa).

Lysine 23 is a catalytic residue. 108–118 (PVAGGMAGGSA) provides a ligand contact to ATP. Aspartate 150 is a catalytic residue.

This sequence belongs to the GHMP kinase family. IspE subfamily.

The catalysed reaction is 4-CDP-2-C-methyl-D-erythritol + ATP = 4-CDP-2-C-methyl-D-erythritol 2-phosphate + ADP + H(+). The protein operates within isoprenoid biosynthesis; isopentenyl diphosphate biosynthesis via DXP pathway; isopentenyl diphosphate from 1-deoxy-D-xylulose 5-phosphate: step 3/6. Functionally, catalyzes the phosphorylation of the position 2 hydroxy group of 4-diphosphocytidyl-2C-methyl-D-erythritol. The protein is 4-diphosphocytidyl-2-C-methyl-D-erythritol kinase of Mycolicibacterium paratuberculosis (strain ATCC BAA-968 / K-10) (Mycobacterium paratuberculosis).